We begin with the raw amino-acid sequence, 373 residues long: 3-isopropylmalate dehydrogenase (373 aa).

82–93 (GPKWGTGAVRPE) contributes to the NAD(+) binding site. Substrate is bound by residues Arg-100, Arg-110, Arg-139, and Asp-231. Residues Asp-231 and Asp-260 each contribute to the Mg(2+) site. NAD(+) is bound at residue 295-306 (GSAPDLPENKVN).

Belongs to the isocitrate and isopropylmalate dehydrogenases family. In terms of assembly, homodimer. Requires Mg(2+) as cofactor. It depends on Mn(2+) as a cofactor.

It localises to the cytoplasm. It catalyses the reaction (2R,3S)-3-isopropylmalate + NAD(+) = 4-methyl-2-oxopentanoate + CO2 + NADH. Its pathway is amino-acid biosynthesis; L-leucine biosynthesis; L-leucine from 3-methyl-2-oxobutanoate: step 3/4. Its function is as follows. Catalyzes the oxidation of 3-carboxy-2-hydroxy-4-methylpentanoate (3-isopropylmalate) to 3-carboxy-4-methyl-2-oxopentanoate. The product decarboxylates to 4-methyl-2 oxopentanoate. The protein is 3-isopropylmalate dehydrogenase (LEU2) of Scheffersomyces stipitis (strain ATCC 58785 / CBS 6054 / NBRC 10063 / NRRL Y-11545) (Yeast).